The chain runs to 344 residues: MLNALYPLFRPALFSMDAEDAHHFTLNNLLRAQRLGLGGCIGNRIAEDPRTVMGVRFPNPVGLAAGLDKDGAYIDGLASFGFGFIEVGTVTPRAQPGNPRPRMFRLPQADALINRMGFNNGGVDAFIANVKASRWKAEGGVLGLNIGKNADTPIERAADDYLYCLERVYPHASYVTVNISSPNTKNLRQLQGASELDSLLSTLKAAQQRLADQHKRYVPVALKIAPDLDADQIGNIGDALVRHKIDGVIATNTTISRDAVKGLPHAEEAGGLSGRPVFEQSTHVVRALRQVVGDAVPIIGVGGIFSGADARAKIDAGAKLVQVYSGLIYRGPTLVRDCAAALRA.

FMN-binding positions include 65–69 and Thr-89; that span reads AGLDK. Residue Lys-69 coordinates substrate. Substrate is bound at residue 114–118; sequence NRMGF. FMN-binding residues include Asn-145 and Asn-178. Asn-178 lines the substrate pocket. The active-site Nucleophile is Ser-181. Asn-183 is a substrate binding site. 2 residues coordinate FMN: Lys-223 and Thr-251. 252–253 provides a ligand contact to substrate; that stretch reads NT. FMN contacts are provided by residues Gly-274, Gly-303, and 324–325; that span reads YS.

This sequence belongs to the dihydroorotate dehydrogenase family. Type 2 subfamily. As to quaternary structure, monomer. FMN serves as cofactor.

It localises to the cell membrane. The catalysed reaction is (S)-dihydroorotate + a quinone = orotate + a quinol. It participates in pyrimidine metabolism; UMP biosynthesis via de novo pathway; orotate from (S)-dihydroorotate (quinone route): step 1/1. In terms of biological role, catalyzes the conversion of dihydroorotate to orotate with quinone as electron acceptor. This Cupriavidus pinatubonensis (strain JMP 134 / LMG 1197) (Cupriavidus necator (strain JMP 134)) protein is Dihydroorotate dehydrogenase (quinone).